The sequence spans 220 residues: Large ribosomal subunit protein uL1 (220 aa).

Belongs to the universal ribosomal protein uL1 family. In terms of assembly, part of the 50S ribosomal subunit.

Its function is as follows. Binds directly to 23S rRNA. The L1 stalk is quite mobile in the ribosome, and is involved in E site tRNA release. Functionally, protein L1 is also a translational repressor protein, it controls the translation of the L11 operon by binding to its mRNA. The chain is Large ribosomal subunit protein uL1 from Ehrlichia ruminantium (strain Gardel).